The chain runs to 543 residues: Probable protein kinase UbiB (543 aa).

A Protein kinase domain is found at 123 to 501; sequence DFDSQALASA…QQRQGQSRYL (379 aa). Residues 129–137 and Lys-152 each bind ATP; that span reads LASASIAQV. Asp-287 (proton acceptor) is an active-site residue. A helical transmembrane segment spans residues 517-539; it reads LADATEVSTGFIVAGALAWFIGW.

This sequence belongs to the ABC1 family. UbiB subfamily.

The protein localises to the cell inner membrane. The protein operates within cofactor biosynthesis; ubiquinone biosynthesis [regulation]. Is probably a protein kinase regulator of UbiI activity which is involved in aerobic coenzyme Q (ubiquinone) biosynthesis. The chain is Probable protein kinase UbiB from Yersinia pseudotuberculosis serotype O:1b (strain IP 31758).